Reading from the N-terminus, the 1136-residue chain is Probable LRR receptor-like serine/threonine-protein kinase At4g36180 (1136 aa).

A signal peptide spans 1–22 (MAMDISLFFIFLVIYAPLVSYA). Residues 23–751 (DESQAEIDAL…TAEGKKKKRK (729 aa)) are Extracellular-facing. LRR repeat units lie at residues 93–115 (MLRK…LAYC), 117–139 (RLLS…MRNL), 141–162 (SLEV…GLPS), 163–186 (SLQF…ANLT), 187–210 (QLQL…GNLQ), 211–233 (SLQY…ISNC), 235–256 (SLVH…AYGA), and 259–280 (KLEV…SLFC). N-linked (GlcNAc...) asparagine glycosylation is found at N105 and N138. 3 N-linked (GlcNAc...) asparagine glycosylation sites follow: N184, N192, and N232. N269 and N281 each carry an N-linked (GlcNAc...) asparagine glycan. LRR repeat units lie at residues 283–304 (SLTI…ETTA), 309–330 (GLQV…WLTN), 333–355 (SLKN…IGNL), 357–379 (RLEE…IKQC), 381–403 (SLDV…LGYM), 405–426 (ALKV…SMVN), 429–452 (QLER…MALT), 453–479 (SLSE…SNLS), 480–500 (FLNL…GNLF), 501–524 (KLTA…SGLP), 525–546 (NVQV…GFSS), 549–571 (SLRY…FGFL), 573–595 (LLVS…IGNC), 597–620 (ALEV…SRLP), 621–643 (RLKV…ISQS), 645–666 (SLNS…SFSG), 669–691 (NLTK…LALI), and 694–716 (NLVY…LGSR). N365 is a glycosylation site (N-linked (GlcNAc...) asparagine). N-linked (GlcNAc...) asparagine glycosylation is found at N441, N474, N477, N482, N511, N535, N554, and N594. An N-linked (GlcNAc...) asparagine glycan is attached at N631. 4 N-linked (GlcNAc...) asparagine glycosylation sites follow: N669, N679, N699, and N719. A helical transmembrane segment spans residues 752-772 (MILMIVMAAIGAFLLSLFCCF). The Cytoplasmic segment spans residues 773 to 1136 (YVYTLLKWRK…ADPTSQPSPA (364 aa)). Residues 786–819 (QQSTTGEKKRSPGRTSAGSRVRSSTSRSSTENGE) form a disordered region. Over residues 799-815 (RTSAGSRVRSSTSRSST) the composition is skewed to low complexity. T830 and T838 each carry phosphothreonine. The Protein kinase domain maps to 841-1123 (FDEENVLSRT…LEGCRVGPDV (283 aa)). Phosphotyrosine occurs at positions 915 and 1010.

The protein belongs to the protein kinase superfamily. Ser/Thr protein kinase family.

Its subcellular location is the cell membrane. It catalyses the reaction L-seryl-[protein] + ATP = O-phospho-L-seryl-[protein] + ADP + H(+). The enzyme catalyses L-threonyl-[protein] + ATP = O-phospho-L-threonyl-[protein] + ADP + H(+). The sequence is that of Probable LRR receptor-like serine/threonine-protein kinase At4g36180 from Arabidopsis thaliana (Mouse-ear cress).